We begin with the raw amino-acid sequence, 326 residues long: N-acetyl-gamma-glutamyl-phosphate reductase (326 aa).

C155 is a catalytic residue.

Belongs to the NAGSA dehydrogenase family. Type 1 subfamily.

It localises to the cytoplasm. It carries out the reaction N-acetyl-L-glutamate 5-semialdehyde + phosphate + NADP(+) = N-acetyl-L-glutamyl 5-phosphate + NADPH + H(+). It participates in amino-acid biosynthesis; L-arginine biosynthesis; N(2)-acetyl-L-ornithine from L-glutamate: step 3/4. Its function is as follows. Catalyzes the NADPH-dependent reduction of N-acetyl-5-glutamyl phosphate to yield N-acetyl-L-glutamate 5-semialdehyde. In Shewanella sediminis (strain HAW-EB3), this protein is N-acetyl-gamma-glutamyl-phosphate reductase.